Reading from the N-terminus, the 500-residue chain is Lysine--tRNA ligase (500 aa).

Mg(2+)-binding residues include Glu410 and Glu417.

It belongs to the class-II aminoacyl-tRNA synthetase family. In terms of assembly, homodimer. It depends on Mg(2+) as a cofactor.

It localises to the cytoplasm. It carries out the reaction tRNA(Lys) + L-lysine + ATP = L-lysyl-tRNA(Lys) + AMP + diphosphate. This is Lysine--tRNA ligase from Shewanella amazonensis (strain ATCC BAA-1098 / SB2B).